A 473-amino-acid chain; its full sequence is 6-phospho-beta-glucosidase (473 aa).

Glutamate 174 (proton donor) is an active-site residue. The active-site Nucleophile is the glutamate 366.

This sequence belongs to the glycosyl hydrolase 1 family.

The catalysed reaction is 6-phospho-beta-D-glucosyl-(1-&gt;4)-D-glucose + H2O = D-glucose 6-phosphate + D-glucose. This chain is 6-phospho-beta-glucosidase (abgA), found in Clostridium longisporum.